We begin with the raw amino-acid sequence, 78 residues long: Large ribosomal subunit protein bL28 (78 aa).

The protein belongs to the bacterial ribosomal protein bL28 family.

The protein is Large ribosomal subunit protein bL28 of Legionella pneumophila (strain Paris).